Here is a 166-residue protein sequence, read N- to C-terminus: NAD(P)H-quinone oxidoreductase subunit I, chloroplastic (166 aa).

4Fe-4S ferredoxin-type domains lie at 55–84 (GRIHFEFDKCIACEVCVRVCPIDLPVVDWQ) and 95–124 (VNYSIDFGICIFCGNCVEYCPTNCLSMTEE). [4Fe-4S] cluster contacts are provided by C64, C67, C70, C74, C104, C107, C110, and C114.

This sequence belongs to the complex I 23 kDa subunit family. NDH is composed of at least 16 different subunits, 5 of which are encoded in the nucleus. The cofactor is [4Fe-4S] cluster.

Its subcellular location is the plastid. It localises to the chloroplast thylakoid membrane. It carries out the reaction a plastoquinone + NADH + (n+1) H(+)(in) = a plastoquinol + NAD(+) + n H(+)(out). It catalyses the reaction a plastoquinone + NADPH + (n+1) H(+)(in) = a plastoquinol + NADP(+) + n H(+)(out). In terms of biological role, NDH shuttles electrons from NAD(P)H:plastoquinone, via FMN and iron-sulfur (Fe-S) centers, to quinones in the photosynthetic chain and possibly in a chloroplast respiratory chain. The immediate electron acceptor for the enzyme in this species is believed to be plastoquinone. Couples the redox reaction to proton translocation, and thus conserves the redox energy in a proton gradient. The chain is NAD(P)H-quinone oxidoreductase subunit I, chloroplastic from Coreopsis petrophiloides (Tickseed).